The chain runs to 562 residues: AT-rich interactive domain-containing protein 1 (562 aa).

Positions 43 to 136 (KELISLFRPL…YLDAFGRWLN (94 aa)) constitute an ARID domain. The ELM2 domain maps to 358–448 (PCALVGSKFQ…KLELGPAFYM (91 aa)).

The protein localises to the nucleus. This is AT-rich interactive domain-containing protein 1 (ARID1) from Arabidopsis thaliana (Mouse-ear cress).